The sequence spans 982 residues: Little elongation complex subunit 2 (982 aa).

S17 and S326 each carry phosphoserine. Over residues 410-427 (TTKVSKSPSPASTSTVPN) the composition is skewed to polar residues. Disordered stretches follow at residues 410 to 450 (TTKV…PDIS) and 473 to 504 (GMDGGPEECKNKDDQGFESCEKVSNSDKPLIQ). Positions 479–497 (EECKNKDDQGFESCEKVSN) are enriched in basic and acidic residues. A Phosphoserine modification is found at S571. T573 bears the Phosphothreonine mark. 3 disordered regions span residues 595–623 (VGSNLSSRPASPNSSSGQASVGNQTNTAC), 672–697 (ENSKQPSVSEQLSGPSDSSSWPKSGW), and 930–982 (PKSL…RKIT). Residues 597–610 (SNLSSRPASPNSSS) show a composition bias toward low complexity. Composition is skewed to polar residues over residues 611 to 623 (GQASVGNQTNTAC) and 672 to 683 (ENSKQPSVSEQL). Positions 684 to 697 (SGPSDSSSWPKSGW) are enriched in low complexity. Polar residues predominate over residues 956 to 970 (SMETKSSCLPAQQVE).

Belongs to the ICE2 family. As to quaternary structure, component of the little elongation complex (LEC), at least composed of ELL (ELL, ELL2 or ELL3), ZC3H8, ICE1 and ICE2. Interacts with ICE1 (via C-terminus domain). Interacts with ELL. In terms of tissue distribution, expressed at low levels in lung and testis.

The protein localises to the nucleus. Its function is as follows. Component of the little elongation complex (LEC), a complex required to regulate small nuclear RNA (snRNA) gene transcription by RNA polymerase II and III. In Homo sapiens (Human), this protein is Little elongation complex subunit 2 (ICE2).